Here is a 406-residue protein sequence, read N- to C-terminus: Probable endo-xylogalacturonan hydrolase A (406 aa).

The signal sequence occupies residues 1 to 18 (MISLNSIFLLSLVGLSRA). A disordered region spans residues 20–49 (PSRSETSPDRTIKPRAACTPTAGGSSSTDD). PbH1 repeat units lie at residues 183–213 (TSNA…DIGA), 214–235 (STYV…AFKP), 237–257 (ANYV…SVGS), 266–289 (VQNV…KTYP), 299–320 (VKNA…QIQS), and 368–390 (TCDV…ILCG). Asp228 (proton donor) is an active-site residue. Asn244 is a glycosylation site (N-linked (GlcNAc...) asparagine). His251 is a catalytic residue. N-linked (GlcNAc...) asparagine glycans are attached at residues Asn273, Asn278, and Asn301.

This sequence belongs to the glycosyl hydrolase 28 family.

The protein resides in the secreted. Pectinolytic enzyme involved in the degradation of xylogalacturonan (xga), a galacturonan backbone heavily substituted with xylose, and which is one important component of the hairy regions of pectin. Activity requires a galacturonic acid backbone substituted with xylose. The sequence is that of Probable endo-xylogalacturonan hydrolase A (xghA) from Aspergillus flavus (strain ATCC 200026 / FGSC A1120 / IAM 13836 / NRRL 3357 / JCM 12722 / SRRC 167).